A 105-amino-acid polypeptide reads, in one-letter code: Large ribosomal subunit protein uL24 (105 aa).

The protein belongs to the universal ribosomal protein uL24 family. Part of the 50S ribosomal subunit.

Functionally, one of two assembly initiator proteins, it binds directly to the 5'-end of the 23S rRNA, where it nucleates assembly of the 50S subunit. One of the proteins that surrounds the polypeptide exit tunnel on the outside of the subunit. The chain is Large ribosomal subunit protein uL24 from Sorangium cellulosum (strain So ce56) (Polyangium cellulosum (strain So ce56)).